The primary structure comprises 216 residues: MTQDSRFPNLFILDHPLIQHKLSHMRDRDTSTRTFRELLREITLLMGYEITRNLPMTTRRLTTPLVEIDAPVIAGKKLAIVPVLRAGIGMSDGLLELVPSARVGHIGVYRAEDHRPVEYLVRLPDLEDRVFILCDPMVATGYSAVHAVDVLKRRNVAGENILFLALVAAPEGVQVFQDAHPDVKLYVASLDSHLNEHAYIVPGLGDAGDRLFGTKN.

Residues R85, R110, and 135–143 (DPMVATGYS) contribute to the 5-phospho-alpha-D-ribose 1-diphosphate site. Residues I200 and 205 to 207 (GDA) contribute to the uracil site. D206 is a binding site for 5-phospho-alpha-D-ribose 1-diphosphate.

This sequence belongs to the UPRTase family. It depends on Mg(2+) as a cofactor.

It carries out the reaction UMP + diphosphate = 5-phospho-alpha-D-ribose 1-diphosphate + uracil. The protein operates within pyrimidine metabolism; UMP biosynthesis via salvage pathway; UMP from uracil: step 1/1. Allosterically activated by GTP. Its function is as follows. Catalyzes the conversion of uracil and 5-phospho-alpha-D-ribose 1-diphosphate (PRPP) to UMP and diphosphate. The protein is Uracil phosphoribosyltransferase of Paraburkholderia xenovorans (strain LB400).